Consider the following 400-residue polypeptide: Malonyl CoA-acyl carrier protein transacylase (400 aa).

Active-site residues include Ser-92 and His-201.

This sequence belongs to the FabD family.

It catalyses the reaction holo-[ACP] + malonyl-CoA = malonyl-[ACP] + CoA. Is involved in the mycosubtilin synthetase assembly, by catalyzing the transfer of malonyl groups to a specific acyl-carrier-protein domain on MycA. The sequence is that of Malonyl CoA-acyl carrier protein transacylase (fenF) from Bacillus subtilis.